Reading from the N-terminus, the 1571-residue chain is MADRGCPLEAAPLPAEVRESLAELELELSEGDITQKGYEKKRAKLLARYIPLIQGIDPSLQAENRIPGPSQTTAAAPKQQKSRPTASRDERFRSDVHTEAVQAALAKYKERKMPMPSKRRSVLVHSSVETYTPPDTSSASEDEGSLRRPGRLTSTPLQSHSSVEPWLDRVIQGSSTSSSASSTSSHPGGRPTTAPSAAATPGAAATTALAGLEAHTHIDLHSAPPDVTTGLVEHSYFERPQVASVRSVPRGCSGSMLETADGVPVNSRVSSKIQQLLNTLKRPKRPPLKEFFVDDFEELLEVQQPDPNQPKPEGSETSVLRGEPLTAGVPRPPSLLATLQRWGTTQPKSPCLTALDTTGKAVYTLTYGKLWSRSLKLAYTLLNKLTSKNEPLLKPGDRVALVFPNSDPVMFMVAFYGCLLAELVPVPIEVPLTRKDAGSQQVGFLLGSCGVFLALTTDACQKGLPKAQTGEVAAFKGWPPLSWLVIDGKHLAKPPKDWHPLAQDTGTGTAYIEYKTSKEGSTVGVTVSHASLLAQCRALTQACGYSEAETLTNVLDFKRDAGLWHGVLTSVMNRMHVVSVPYALMKANPLSWIQKVCFYKARAALVKSRDMHWSLLAQRGQRDVSLSSLRMLIVADGANPWSISSCDAFLNVFQSRGLRPEVICPCASSPEALTVAIRRPPDLGGPPPRKAVLSMNGLSYGVIRVDTEEKLSVLTVQDVGQVMPGANVCVVKLEGTPYLCKTDEVGEICVSSSATGTAYYGLLGITKNVFEAVPVTTGGAPIFDRPFTRTGLLGFIGPDNLVFIVGKLDGLMVTGVRRHNADDVVATALAVEPMKFVYRGRIAVFSVTVLHDDRIVLVAEQRPDASEEDSFQWMSRVLQAIDSIHQVGVYCLALVPANTLPKAPLGGIHISETKQRFLEGTLHPCNVLMCPHTCVTNLPKPRQKQPEVGPASMIVGNLVAGKRIAQASGRELAHLEDSDQARKFLFLADVLQWRAHTTPDHPLFLLLNAKGTVTSTATCVQLHKRAERVAAALMEKGRLSVGDHVALVYPPGVDLIAAFYGCLYCGCVPVTVRPPHPQNLGTTLPTVKMIVEVSKSACVLTTQAVTRLLRSKEAAAAVDIRTWPTILDTDDIPKKKIASVFRPPSPDVLAYLDFSVSTTGILAGVKMSHAATSALCRSIKLQCELYPSRQIAICLDPYCGLGFALWCLCSVYSGHQSVLVPPLELESNVSLWLSAVSQYKARVTFCSYSVMEMCTKGLGAQTGVLRMKGVNLSCVRTCMVVAEERPRIALTQSFSKLFKDLGLPARAVSTTFGCRVNVAICLQGTAGPDPTTVYVDMRALRHDRVRLVERGSPHSLPLMESGKILPGVKVIIAHTETKGPLGDSHLGEIWVSSPHNATGYYTVYGEEALHADHFSARLSFGDTQTIWARTGYLGFLRRTELTDASGGRHDALYVVGSLDETLELRGMRYHPIDIETSVIRAHRSIAECAVFTWTNLLVVVVELDGLEQDALDLVALVTNVVLEEHYLVVGVVVIVDPGVIPINSRGEKQRMHLRDGFLADQLDPIYVAYNM.

One can recognise a DMAP1-binding domain in the interval 9-127; sequence EAAPLPAEVR…KRRSVLVHSS (119 aa). A disordered region spans residues 60–203; that stretch reads LQAENRIPGP…APSAAATPGA (144 aa). Residues 86–98 are compositionally biased toward basic and acidic residues; sequence ASRDERFRSDVHT. Residue Ser94 is modified to Phosphoserine. 2 stretches are compositionally biased toward polar residues: residues 127-139 and 152-162; these read SVET…TSSA and LTSTPLQSHSS. Phosphothreonine occurs at positions 132 and 155. The segment covering 174-203 has biased composition (low complexity); the sequence is SSTSSSASSTSSHPGGRPTTAPSAAATPGA. Short sequence motifs (PXXP motif; required for interaction with CTTN) lie at residues 283–286 and 307–310; these read PKRP and PNQP. Positions 302–327 are disordered; it reads VQQPDPNQPKPEGSETSVLRGEPLTA.

The protein belongs to the DIP2 family. Interacts with FSTL1; DIP2A may act as a cell surface receptor for FSTL1. Interacts (via N-terminus) with CTTN (via SH3 domain); the interaction promotes acetylation of CTTN and is required for proper synaptic transmission. Interacts with SHANK3. As to expression, low expression in all tissues tested.

Its subcellular location is the cell membrane. It localises to the mitochondrion. It is found in the cell projection. The protein localises to the dendritic spine. It catalyses the reaction acetate + ATP + CoA = acetyl-CoA + AMP + diphosphate. Its function is as follows. Catalyzes the de novo synthesis of acetyl-CoA in vitro. Promotes acetylation of CTTN, possibly by providing the acetyl donor, ensuring correct dendritic spine morphology and synaptic transmission. Binds to follistatin-related protein FSTL1 and may act as a cell surface receptor for FSTL1, contributing to AKT activation and subsequent FSTL1-induced survival and function of endothelial cells and cardiac myocytes. The sequence is that of Disco-interacting protein 2 homolog A (DIP2A) from Homo sapiens (Human).